The primary structure comprises 279 residues: Putative pyruvate, phosphate dikinase regulatory protein (279 aa).

156-163 is an ADP binding site; the sequence is GISRVGKT.

The protein belongs to the pyruvate, phosphate/water dikinase regulatory protein family. PDRP subfamily.

It carries out the reaction N(tele)-phospho-L-histidyl/L-threonyl-[pyruvate, phosphate dikinase] + ADP = N(tele)-phospho-L-histidyl/O-phospho-L-threonyl-[pyruvate, phosphate dikinase] + AMP + H(+). It catalyses the reaction N(tele)-phospho-L-histidyl/O-phospho-L-threonyl-[pyruvate, phosphate dikinase] + phosphate + H(+) = N(tele)-phospho-L-histidyl/L-threonyl-[pyruvate, phosphate dikinase] + diphosphate. Functionally, bifunctional serine/threonine kinase and phosphorylase involved in the regulation of the pyruvate, phosphate dikinase (PPDK) by catalyzing its phosphorylation/dephosphorylation. This is Putative pyruvate, phosphate dikinase regulatory protein from Chloroflexus aurantiacus (strain ATCC 29366 / DSM 635 / J-10-fl).